Here is a 287-residue protein sequence, read N- to C-terminus: Phosphatidylglycerol--prolipoprotein diacylglyceryl transferase (287 aa).

The next 4 membrane-spanning stretches (helical) occupy residues valine 26–alanine 46, phenylalanine 71–tyrosine 91, isoleucine 106–valine 126, and glycine 132–phenylalanine 152. Arginine 154 provides a ligand contact to a 1,2-diacyl-sn-glycero-3-phospho-(1'-sn-glycerol). 3 consecutive transmembrane segments (helical) span residues serine 187–alanine 207, glycine 217–phenylalanine 237, and tryptophan 251–tryptophan 271.

Belongs to the Lgt family.

Its subcellular location is the cell inner membrane. The enzyme catalyses L-cysteinyl-[prolipoprotein] + a 1,2-diacyl-sn-glycero-3-phospho-(1'-sn-glycerol) = an S-1,2-diacyl-sn-glyceryl-L-cysteinyl-[prolipoprotein] + sn-glycerol 1-phosphate + H(+). It participates in protein modification; lipoprotein biosynthesis (diacylglyceryl transfer). In terms of biological role, catalyzes the transfer of the diacylglyceryl group from phosphatidylglycerol to the sulfhydryl group of the N-terminal cysteine of a prolipoprotein, the first step in the formation of mature lipoproteins. The chain is Phosphatidylglycerol--prolipoprotein diacylglyceryl transferase from Allorhizobium ampelinum (strain ATCC BAA-846 / DSM 112012 / S4) (Agrobacterium vitis (strain S4)).